The following is a 39-amino-acid chain: B melanoma antigen 4 (39 aa).

The N-terminal stretch at 1-17 (MAAGAVFLALSAQLLQA) is a signal peptide.

The protein belongs to the BAGE family. Not expressed in normal tissues except in testis. Expressed in melanoma, bladder and lung carcinomas.

It localises to the secreted. Its function is as follows. Unknown. Candidate gene encoding tumor antigens. The sequence is that of B melanoma antigen 4 (BAGE4) from Homo sapiens (Human).